Here is a 291-residue protein sequence, read N- to C-terminus: Kidney mitochondrial carrier protein 1 (291 aa).

An N-acetylserine modification is found at Ser-2. 3 Solcar repeats span residues 7-96 (KPFV…LKRL), 104-189 (ETLL…TKKH), and 198-289 (DTVS…LKKL). 6 helical membrane-spanning segments follow: residues 9–26 (FVYGGLASITAECGTFPI), 71–89 (GIAPAMLRQASYGTIKIGT), 106–124 (LLINVVCGILSGVISSAIA), 164–183 (GVSLTAQRAAIVVGVELPVY), 204–224 (FLSSFTCGLVGALASNPVDVV), and 264–283 (GFWPNWLRLGPWNIIFFLTY).

Belongs to the mitochondrial carrier (TC 2.A.29) family. As to quaternary structure, interacts with VDAC1.

Its subcellular location is the mitochondrion inner membrane. It carries out the reaction sulfite(in) + sulfate(out) = sulfite(out) + sulfate(in). The catalysed reaction is thiosulfate(in) + sulfate(out) = thiosulfate(out) + sulfate(in). The enzyme catalyses sulfate(out) + phosphate(in) = sulfate(in) + phosphate(out). It catalyses the reaction oxalate(in) + sulfate(out) = oxalate(out) + sulfate(in). It carries out the reaction malonate(in) + sulfate(out) = malonate(out) + sulfate(in). The catalysed reaction is maleate(in) + sulfate(out) = maleate(out) + sulfate(in). The enzyme catalyses (S)-malate(in) + sulfate(out) = (S)-malate(out) + sulfate(in). It catalyses the reaction (3S)-citramalate(in) + sulfate(out) = (3S)-citramalate(out) + sulfate(in). It carries out the reaction (3R)-citramalate(in) + sulfate(out) = (3R)-citramalate(out) + sulfate(in). The catalysed reaction is sulfate(out) + succinate(in) = sulfate(in) + succinate(out). The enzyme catalyses (S,S)-tartrate(in) + sulfate(out) = (S,S)-tartrate(out) + sulfate(in). It catalyses the reaction (2R,3R)-tartrate(in) + sulfate(out) = (2R,3R)-tartrate(out) + sulfate(in). It carries out the reaction D-aspartate(in) + sulfate(out) = D-aspartate(out) + sulfate(in). The catalysed reaction is L-aspartate(in) + sulfate(out) = L-aspartate(out) + sulfate(in). The enzyme catalyses sulfate(in) = sulfate(out). It catalyses the reaction phosphate(in) = phosphate(out). It carries out the reaction (S)-malate(out) = (S)-malate(in). Its function is as follows. Antiporter that transports inorganic anions (sulfate, sulfite, thiosulfate and phosphate) and, to a lesser extent, a variety of dicarboxylates (e.g. malonate, malate and citramalate) and, even more so, aspartate. The sulfate/sulfate exchange is much higher than the phosphate/phosphate and malate/malate exchanges. The transport affinities is higher for sulfate and thiosulfate than for any other substrate. May catalyze the export of sulfite and thiosulfate (the hydrogen sulfide degradation products) from the mitochondria, thereby modulating the level of the hydrogen sulfide. Also may mediate a very low unidirectional transport of sulfate, phosphate and (S)-malate. In Rattus norvegicus (Rat), this protein is Kidney mitochondrial carrier protein 1.